The following is a 121-amino-acid chain: Large ribosomal subunit protein uL22c (121 aa).

This sequence belongs to the universal ribosomal protein uL22 family. Part of the 50S ribosomal subunit.

The protein localises to the plastid. The protein resides in the chloroplast. Functionally, this protein binds specifically to 23S rRNA. Its function is as follows. The globular domain of the protein is located near the polypeptide exit tunnel on the outside of the subunit, while an extended beta-hairpin is found that lines the wall of the exit tunnel in the center of the 70S ribosome. The sequence is that of Large ribosomal subunit protein uL22c (rpl22) from Lemna minor (Common duckweed).